Consider the following 71-residue polypeptide: Heat-stable enterotoxin II (71 aa).

Residues 1-23 (MKKNIAFLLASMFVFSIATNAYA) form the signal peptide. Intrachain disulfides connect Cys-33-Cys-71 and Cys-44-Cys-59.

It localises to the secreted. In terms of biological role, toxin which activates the particulate form of guanylate cyclase and increases cyclic GMP levels within the host intestinal epithelial cells. The polypeptide is Heat-stable enterotoxin II (stiI) (Escherichia coli).